The chain runs to 72 residues: MENPHEQVQANILSRIIGNVKRLNESVAILNQELVTINNRNKNLEIMGAICDNYHSSVQFNLEATNNKKPPL.

Position 1 is an N-acetylmethionine (methionine 1). The stretch at 19 to 47 (NVKRLNESVAILNQELVTINNRNKNLEIM) forms a coiled coil.

Belongs to the DASH complex DAD4 family. In terms of assembly, component of the DASH complex consisting of ASK1, DAD1, DAD2, DAD3, DAD4, DAM1, DUO1, HSK3, SPC19 and SPC34, with a stoichiometry of one copy of each subunit per complex. Multiple DASH complexes oligomerize to form a ring that encircles spindle microtubules and organizes the rod-like NDC80 complexes of the outer kinetochore. DASH complex oligomerization strengthens microtubule attachments. On cytoplasmic microtubules, DASH complexes appear to form patches instead of rings.

The protein resides in the nucleus. It localises to the cytoplasm. It is found in the cytoskeleton. Its subcellular location is the spindle. The protein localises to the chromosome. The protein resides in the centromere. It localises to the kinetochore. Its function is as follows. Component of the DASH complex that connects microtubules with kinetochores and couples microtubule depolymerisation to chromosome movement; it is involved in retrieving kinetochores to the spindle poles before their re-orientation on the spindle in early mitosis and allows microtubule depolymerization to pull chromosomes apart and resist detachment during anaphase. Kinetochores, consisting of a centromere-associated inner segment and a microtubule-contacting outer segment, play a crucial role in chromosome segregation by mediating the physical connection between centromeric DNA and microtubules. Kinetochores also serve as an input point for the spindle assembly checkpoint, which delays anaphase until all chromosomes have bioriented on the mitotic spindle. During spindle-kinetochore attachment, kinetochores first attach to the lateral surface of spindle microtubules, which supports the congression of chromosomes toward the middle of the dividing cell; they then slide along towards the spindle pole, a process independent of the DASH complex but requiring the NDC80 complex. When the end of a disassembling microtubule reaches the laterally attached kinetochore, the DASH complex together with the NDC80 complex and STU2 convert lateral attachment to end-on capture to produce a structure that can track with microtubule shortening and sustain attachment when tension is applied across sister kinetochores upon their biorientation. Microtubule depolymerization proceeds by protofilament splaying and induces the kinetochore-attached DASH complex to slide longitudinally, thereby helping to transduce depolymerization energy into pulling forces to disjoin chromatids. Incorrect microtubule attachments are corrected by releasing microubules from the kinetochore through phosphorylation by IPL1 of kinetochore components. Links the microtubule cytoskeleton to chromosomes during interphase. Also contributes to the poleward transport of kinetochores on microtubules following centromeric DNA replication in S-phase. The polypeptide is DASH complex subunit DAD4 (DAD4) (Saccharomyces cerevisiae (strain ATCC 204508 / S288c) (Baker's yeast)).